A 430-amino-acid polypeptide reads, in one-letter code: Ribosomal protein uS12 methylthiotransferase RimO (430 aa).

Positions 1–116 (MRVGIKVLGC…IANAIENGTD (116 aa)) constitute an MTTase N-terminal domain. 6 residues coordinate [4Fe-4S] cluster: C10, C46, C79, C148, C152, and C155. One can recognise a Radical SAM core domain in the interval 134-365 (LEERPYAYVK…LLQAEISNSR (232 aa)). The TRAM domain occupies 367 to 430 (DRFVGKKLKF…DEYDMWGSVI (64 aa)).

The protein belongs to the methylthiotransferase family. RimO subfamily. The cofactor is [4Fe-4S] cluster.

Its subcellular location is the cytoplasm. The enzyme catalyses L-aspartate(89)-[ribosomal protein uS12]-hydrogen + (sulfur carrier)-SH + AH2 + 2 S-adenosyl-L-methionine = 3-methylsulfanyl-L-aspartate(89)-[ribosomal protein uS12]-hydrogen + (sulfur carrier)-H + 5'-deoxyadenosine + L-methionine + A + S-adenosyl-L-homocysteine + 2 H(+). Functionally, catalyzes the methylthiolation of an aspartic acid residue of ribosomal protein uS12. This chain is Ribosomal protein uS12 methylthiotransferase RimO, found in Thermotoga petrophila (strain ATCC BAA-488 / DSM 13995 / JCM 10881 / RKU-1).